A 146-amino-acid chain; its full sequence is MORN repeat-containing protein 4 (146 aa).

MORN repeat units lie at residues 16 to 38 (YRGE…DGGT), 39 to 61 (YLGH…DGSR), 62 to 84 (YEGE…DNMT), and 85 to 107 (FEGE…DGSH).

As to quaternary structure, interacts with MYO3A. Retina.

It localises to the cytoplasm. The protein localises to the cell projection. It is found in the filopodium tip. The protein resides in the stereocilium. Plays a role in promoting axonal degeneration following neuronal injury by toxic insult or trauma. This chain is MORN repeat-containing protein 4 (MORN4), found in Bos taurus (Bovine).